A 153-amino-acid chain; its full sequence is SsrA-binding protein (153 aa).

Residues 129-153 (KREDMKKKDQSREMAQALRERSKSH) form a disordered region.

It belongs to the SmpB family.

It is found in the cytoplasm. In terms of biological role, required for rescue of stalled ribosomes mediated by trans-translation. Binds to transfer-messenger RNA (tmRNA), required for stable association of tmRNA with ribosomes. tmRNA and SmpB together mimic tRNA shape, replacing the anticodon stem-loop with SmpB. tmRNA is encoded by the ssrA gene; the 2 termini fold to resemble tRNA(Ala) and it encodes a 'tag peptide', a short internal open reading frame. During trans-translation Ala-aminoacylated tmRNA acts like a tRNA, entering the A-site of stalled ribosomes, displacing the stalled mRNA. The ribosome then switches to translate the ORF on the tmRNA; the nascent peptide is terminated with the 'tag peptide' encoded by the tmRNA and targeted for degradation. The ribosome is freed to recommence translation, which seems to be the essential function of trans-translation. The protein is SsrA-binding protein of Geobacter metallireducens (strain ATCC 53774 / DSM 7210 / GS-15).